A 159-amino-acid polypeptide reads, in one-letter code: SsrA-binding protein (159 aa).

Residues 134–159 (KLHDKRETSKERDWNRQKNRLLKERG) form a disordered region. Positions 137 to 159 (DKRETSKERDWNRQKNRLLKERG) are enriched in basic and acidic residues.

This sequence belongs to the SmpB family.

It localises to the cytoplasm. Required for rescue of stalled ribosomes mediated by trans-translation. Binds to transfer-messenger RNA (tmRNA), required for stable association of tmRNA with ribosomes. tmRNA and SmpB together mimic tRNA shape, replacing the anticodon stem-loop with SmpB. tmRNA is encoded by the ssrA gene; the 2 termini fold to resemble tRNA(Ala) and it encodes a 'tag peptide', a short internal open reading frame. During trans-translation Ala-aminoacylated tmRNA acts like a tRNA, entering the A-site of stalled ribosomes, displacing the stalled mRNA. The ribosome then switches to translate the ORF on the tmRNA; the nascent peptide is terminated with the 'tag peptide' encoded by the tmRNA and targeted for degradation. The ribosome is freed to recommence translation, which seems to be the essential function of trans-translation. The sequence is that of SsrA-binding protein from Rhizobium meliloti (strain 1021) (Ensifer meliloti).